Here is a 481-residue protein sequence, read N- to C-terminus: Arylsulfatase (481 aa).

Residues Asp11, Gln12, and Cys51 each coordinate Ca(2+). Cys51 serves as the catalytic Nucleophile. Cys51 bears the 3-oxoalanine (Cys) mark. Residue His102 is part of the active site. Ca(2+) is bound by residues Asp302 and His303.

Belongs to the sulfatase family. The cofactor is Ca(2+). Post-translationally, the conversion to 3-oxoalanine (also known as C-formylglycine, FGly), of a serine or cysteine residue in prokaryotes and of a cysteine residue in eukaryotes, is critical for catalytic activity.

The enzyme catalyses an aryl sulfate + H2O = a phenol + sulfate + H(+). Has sulfatase activity toward para-nitrophenyl sulfate, which is increased in presence of calcium ion. This Clostridium perfringens (strain 13 / Type A) protein is Arylsulfatase.